Here is a 199-residue protein sequence, read N- to C-terminus: uncharacterized protein (199 aa).

This is an uncharacterized protein from Rattus norvegicus (Rat).